The sequence spans 305 residues: Non-homologous end joining protein Ku (305 aa).

One can recognise a Ku domain in the interval 16–202 (SLVSFGISLI…KVDPEQLSLA (187 aa)). Residues 263 to 305 (GEENGRKKSVSGAQHRSRRKSKGEQKLKVVRSGSSSDKRRKSA) form a disordered region.

This sequence belongs to the prokaryotic Ku family. In terms of assembly, homodimer. Interacts with LigD.

Its function is as follows. With LigD forms a non-homologous end joining (NHEJ) DNA repair enzyme, which repairs dsDNA breaks with reduced fidelity. Binds linear dsDNA with 5'- and 3'- overhangs but not closed circular dsDNA nor ssDNA. Recruits and stimulates the ligase activity of LigD. The chain is Non-homologous end joining protein Ku from Acidobacterium capsulatum (strain ATCC 51196 / DSM 11244 / BCRC 80197 / JCM 7670 / NBRC 15755 / NCIMB 13165 / 161).